We begin with the raw amino-acid sequence, 114 residues long: Iron-sulfur cluster insertion protein ErpA (114 aa).

Positions 42, 106, and 108 each coordinate iron-sulfur cluster.

It belongs to the HesB/IscA family. Homodimer. The cofactor is iron-sulfur cluster.

Functionally, required for insertion of 4Fe-4S clusters for at least IspG. In Pseudoalteromonas atlantica (strain T6c / ATCC BAA-1087), this protein is Iron-sulfur cluster insertion protein ErpA.